The following is a 315-amino-acid chain: Methionyl-tRNA formyltransferase (315 aa).

117–120 (SLLP) serves as a coordination point for (6S)-5,6,7,8-tetrahydrofolate.

This sequence belongs to the Fmt family.

It catalyses the reaction L-methionyl-tRNA(fMet) + (6R)-10-formyltetrahydrofolate = N-formyl-L-methionyl-tRNA(fMet) + (6S)-5,6,7,8-tetrahydrofolate + H(+). Its function is as follows. Attaches a formyl group to the free amino group of methionyl-tRNA(fMet). The formyl group appears to play a dual role in the initiator identity of N-formylmethionyl-tRNA by promoting its recognition by IF2 and preventing the misappropriation of this tRNA by the elongation apparatus. The sequence is that of Methionyl-tRNA formyltransferase from Methylibium petroleiphilum (strain ATCC BAA-1232 / LMG 22953 / PM1).